Here is a 215-residue protein sequence, read N- to C-terminus: LysM and putative peptidoglycan-binding domain-containing protein 1 (215 aa).

The LysM domain maps to L37 to I81. Polar residues-rich tracts occupy residues G86 to E103 and G173 to S189. 2 disordered regions span residues G86 to F133 and A148 to S203.

This Xenopus laevis (African clawed frog) protein is LysM and putative peptidoglycan-binding domain-containing protein 1 (lysmd1).